Consider the following 215-residue polypeptide: Cytochrome b6 (215 aa).

The chain crosses the membrane as a helical span at residues 32 to 52 (IFYCLGGITLTCFLVQIATGF). Cys-35 contacts heme c. Residues His-86 and His-100 each coordinate heme b. 3 consecutive transmembrane segments (helical) span residues 90–110 (ASMM…TGGF), 116–136 (LTWV…VTGY), and 186–206 (LHTF…FLMI). Positions 187 and 202 each coordinate heme b.

It belongs to the cytochrome b family. PetB subfamily. As to quaternary structure, the 4 large subunits of the cytochrome b6-f complex are cytochrome b6, subunit IV (17 kDa polypeptide, PetD), cytochrome f and the Rieske protein, while the 4 small subunits are PetG, PetL, PetM and PetN. The complex functions as a dimer. Requires heme b as cofactor. The cofactor is heme c.

The protein localises to the plastid. It is found in the chloroplast thylakoid membrane. Component of the cytochrome b6-f complex, which mediates electron transfer between photosystem II (PSII) and photosystem I (PSI), cyclic electron flow around PSI, and state transitions. The protein is Cytochrome b6 of Adiantum capillus-veneris (Maidenhair fern).